A 336-amino-acid polypeptide reads, in one-letter code: Solute-binding protein Csal_2479 (336 aa).

A signal peptide spans methionine 1 to alanine 33. Residues histidine 42, glutamine 80, arginine 156, arginine 177, tyrosine 200, asparagine 217–asparagine 218, and glutamate 244 each bind beta-D-glucuronate.

It belongs to the bacterial solute-binding protein 7 family. In terms of assembly, the complex is comprised of an extracytoplasmic solute-binding protein and a heteromeric permease formed by two transmembrane proteins.

It is found in the periplasm. Functionally, solute-binding protein that binds D-glucuronate (in vitro). Probably part of a tripartite ATP-independent periplasmic (TRAP) transport system that mediates solute transport into the cytoplasm. The polypeptide is Solute-binding protein Csal_2479 (Chromohalobacter salexigens (strain ATCC BAA-138 / DSM 3043 / CIP 106854 / NCIMB 13768 / 1H11)).